The primary structure comprises 255 residues: Ly6/PLAUR domain-containing protein 8 (255 aa).

The signal sequence occupies residues 1–20 (MRGVFIAGVIAAFAITVVDS). Residues Asn-22, Asn-30, Asn-53, Asn-72, Asn-76, Asn-105, Asn-115, Asn-128, Asn-154, Asn-169, Asn-179, Asn-200, and Asn-210 are each glycosylated (N-linked (GlcNAc...) asparagine). The 50-residue stretch at 121–170 (CMSCYGHNKTLCEEKPQKCYEGEQCVFIIAEMVNGSGRVELKGCSDISNS) folds into the UPAR/Ly6 domain. The GPI-anchor amidated serine moiety is linked to residue Ser-233. A propeptide spans 234–255 (MGTKASFTSSIFGSLLLLKLLF) (removed in mature form).

The protein belongs to the CNF-like-inhibitor family. Post-translationally, highly N-glycosylated. Not O-glycosylated. In terms of processing, GPI-anchored. The GPI-anchor is cleaved, leading to secretion into the colonic lumen. As to expression, specifically present in enterocytes located at the uppermost epithelial layer of the colon (at protein level). Exclusively expressed in the large intestine: specifically expressed on the apical surface of epithelial cells located at the uppermost layer of the colonic gland.

The protein resides in the cell membrane. Its subcellular location is the secreted. In terms of biological role, secreted protein specifically required to prevent invasion of Gram-negative bacteria in the inner mucus layer of the colon epithelium, a portion of the large intestine which is free of commensal microbiota. Prevents invasion of flagellated microbiota by binding to the flagellum of bacteria, such as P.mirabilis, thereby inhibiting bacterial motility in the intestinal lumen. Segregation of intestinal bacteria and epithelial cells in the colon is required to preserve intestinal homeostasis. The chain is Ly6/PLAUR domain-containing protein 8 from Mus musculus (Mouse).